A 120-amino-acid chain; its full sequence is U3-hexatoxin-Hi1a (120 aa).

Positions 1 to 19 (MKLLYFFVVITVLVAVAAA) are cleaved as a signal peptide. The propeptide occupies 20–51 (LPAKTEEQIAAEENQLVEDLVQYAGTRLTRKR).

It belongs to the neurotoxin 25 family. F7 subfamily. In terms of processing, contains 4 disulfide bonds. As to expression, expressed by the venom gland.

It localises to the secreted. Its function is as follows. Weak insecticidal toxin with probable ion channel impairing activity. In vivo, induces paralysis when injected into sheep blowflies (L.cuprina). Shows weak toxicity, since it is only toxic at high doses, and flies recover within 24 hours. The sequence is that of U3-hexatoxin-Hi1a from Hadronyche infensa (Fraser island funnel-web spider).